Consider the following 540-residue polypeptide: CTP synthase (540 aa).

The segment at 1-270 (MNNLTSTKFI…DTQILKHFNI (270 aa)) is amidoligase domain. Ser18 contacts CTP. Position 18 (Ser18) interacts with UTP. ATP contacts are provided by residues 19 to 24 (SLGKGL) and Asp76. Positions 76 and 144 each coordinate Mg(2+). CTP is bound by residues 151 to 153 (DIE), 191 to 196 (KTKPTQ), and Lys227. Residues 191–196 (KTKPTQ) and Lys227 contribute to the UTP site. In terms of domain architecture, Glutamine amidotransferase type-1 spans 295–537 (TIAIIGKYIK…VQASLNYQET (243 aa)). Gly356 is an L-glutamine binding site. Residue Cys383 is the Nucleophile; for glutamine hydrolysis of the active site. L-glutamine contacts are provided by residues 384-387 (MGMQ), Glu407, and Arg462. Active-site residues include His510 and Glu512.

This sequence belongs to the CTP synthase family. Homotetramer.

It carries out the reaction UTP + L-glutamine + ATP + H2O = CTP + L-glutamate + ADP + phosphate + 2 H(+). It catalyses the reaction L-glutamine + H2O = L-glutamate + NH4(+). The catalysed reaction is UTP + NH4(+) + ATP = CTP + ADP + phosphate + 2 H(+). It participates in pyrimidine metabolism; CTP biosynthesis via de novo pathway; CTP from UDP: step 2/2. With respect to regulation, allosterically activated by GTP, when glutamine is the substrate; GTP has no effect on the reaction when ammonia is the substrate. The allosteric effector GTP functions by stabilizing the protein conformation that binds the tetrahedral intermediate(s) formed during glutamine hydrolysis. Inhibited by the product CTP, via allosteric rather than competitive inhibition. Its function is as follows. Catalyzes the ATP-dependent amination of UTP to CTP with either L-glutamine or ammonia as the source of nitrogen. Regulates intracellular CTP levels through interactions with the four ribonucleotide triphosphates. This Ehrlichia ruminantium (strain Welgevonden) protein is CTP synthase.